Consider the following 154-residue polypeptide: 6,7-dimethyl-8-ribityllumazine synthase (154 aa).

Residues phenylalanine 23, 57–59 (AFE), and 81–83 (AVI) each bind 5-amino-6-(D-ribitylamino)uracil. 86–87 (AT) contacts (2S)-2-hydroxy-3-oxobutyl phosphate. The Proton donor role is filled by histidine 89. Phenylalanine 114 contributes to the 5-amino-6-(D-ribitylamino)uracil binding site. Residue arginine 128 coordinates (2S)-2-hydroxy-3-oxobutyl phosphate.

Belongs to the DMRL synthase family.

The enzyme catalyses (2S)-2-hydroxy-3-oxobutyl phosphate + 5-amino-6-(D-ribitylamino)uracil = 6,7-dimethyl-8-(1-D-ribityl)lumazine + phosphate + 2 H2O + H(+). It functions in the pathway cofactor biosynthesis; riboflavin biosynthesis; riboflavin from 2-hydroxy-3-oxobutyl phosphate and 5-amino-6-(D-ribitylamino)uracil: step 1/2. In terms of biological role, catalyzes the formation of 6,7-dimethyl-8-ribityllumazine by condensation of 5-amino-6-(D-ribitylamino)uracil with 3,4-dihydroxy-2-butanone 4-phosphate. This is the penultimate step in the biosynthesis of riboflavin. The chain is 6,7-dimethyl-8-ribityllumazine synthase from Syntrophus aciditrophicus (strain SB).